The sequence spans 351 residues: UDP-3-O-acylglucosamine N-acyltransferase (351 aa).

Residue His-257 is the Proton acceptor of the active site.

It belongs to the transferase hexapeptide repeat family. LpxD subfamily. In terms of assembly, homotrimer.

The catalysed reaction is a UDP-3-O-[(3R)-3-hydroxyacyl]-alpha-D-glucosamine + a (3R)-hydroxyacyl-[ACP] = a UDP-2-N,3-O-bis[(3R)-3-hydroxyacyl]-alpha-D-glucosamine + holo-[ACP] + H(+). It functions in the pathway bacterial outer membrane biogenesis; LPS lipid A biosynthesis. Its function is as follows. Catalyzes the N-acylation of UDP-3-O-acylglucosamine using 3-hydroxyacyl-ACP as the acyl donor. Is involved in the biosynthesis of lipid A, a phosphorylated glycolipid that anchors the lipopolysaccharide to the outer membrane of the cell. The protein is UDP-3-O-acylglucosamine N-acyltransferase of Methylorubrum populi (strain ATCC BAA-705 / NCIMB 13946 / BJ001) (Methylobacterium populi).